The following is a 704-amino-acid chain: Phosphate acetyltransferase (704 aa).

The tract at residues alanine 379–alanine 704 is phosphate acetyltransferase.

It in the N-terminal section; belongs to the CobB/CobQ family. In the C-terminal section; belongs to the phosphate acetyltransferase and butyryltransferase family. Homohexamer.

It localises to the cytoplasm. The catalysed reaction is acetyl-CoA + phosphate = acetyl phosphate + CoA. It functions in the pathway metabolic intermediate biosynthesis; acetyl-CoA biosynthesis; acetyl-CoA from acetate: step 2/2. Its activity is regulated as follows. Activity is increased under anaerobic growth conditions. Its function is as follows. Involved in acetate metabolism. In combination with LdhA and AckA, allows fermentation of pyruvate, enhancing long-term survival under anaerobic conditions. The polypeptide is Phosphate acetyltransferase (pta) (Pseudomonas aeruginosa (strain ATCC 15692 / DSM 22644 / CIP 104116 / JCM 14847 / LMG 12228 / 1C / PRS 101 / PAO1)).